Consider the following 291-residue polypeptide: Light-independent protochlorophyllide reductase iron-sulfur ATP-binding protein (291 aa).

ATP is bound by residues 10–15 and Lys39; that span reads GIGKST. Ser14 is a Mg(2+) binding site. 2 residues coordinate [4Fe-4S] cluster: Cys95 and Cys129. 180–181 serves as a coordination point for ATP; that stretch reads NR.

It belongs to the NifH/BchL/ChlL family. In terms of assembly, homodimer. Protochlorophyllide reductase is composed of three subunits; ChlL, ChlN and ChlB. Requires [4Fe-4S] cluster as cofactor.

It localises to the plastid. The protein localises to the chloroplast. It catalyses the reaction chlorophyllide a + oxidized 2[4Fe-4S]-[ferredoxin] + 2 ADP + 2 phosphate = protochlorophyllide a + reduced 2[4Fe-4S]-[ferredoxin] + 2 ATP + 2 H2O. It participates in porphyrin-containing compound metabolism; chlorophyll biosynthesis (light-independent). Its function is as follows. Component of the dark-operative protochlorophyllide reductase (DPOR) that uses Mg-ATP and reduced ferredoxin to reduce ring D of protochlorophyllide (Pchlide) to form chlorophyllide a (Chlide). This reaction is light-independent. The L component serves as a unique electron donor to the NB-component of the complex, and binds Mg-ATP. The chain is Light-independent protochlorophyllide reductase iron-sulfur ATP-binding protein from Picea abies (Norway spruce).